Reading from the N-terminus, the 120-residue chain is UPF0344 protein lmo2265 (120 aa).

4 helical membrane passes run 3–23 (GYIH…ALLI), 33–53 (MLQM…IMMV), 62–82 (ILAI…EMLL), and 92–112 (GMFL…GFYL).

The protein belongs to the UPF0344 family.

It is found in the cell membrane. This Listeria monocytogenes serovar 1/2a (strain ATCC BAA-679 / EGD-e) protein is UPF0344 protein lmo2265.